The sequence spans 252 residues: Enolase-phosphatase E1 (252 aa).

Residues Asp14 and Glu16 each contribute to the Mg(2+) site. Substrate-binding positions include 143 to 144 (SS) and Lys177. Asp202 contributes to the Mg(2+) binding site.

Belongs to the HAD-like hydrolase superfamily. MasA/MtnC family. As to quaternary structure, monomer. Mg(2+) is required as a cofactor.

The protein resides in the cytoplasm. It localises to the nucleus. It carries out the reaction 5-methylsulfanyl-2,3-dioxopentyl phosphate + H2O = 1,2-dihydroxy-5-(methylsulfanyl)pent-1-en-3-one + phosphate. It functions in the pathway amino-acid biosynthesis; L-methionine biosynthesis via salvage pathway; L-methionine from S-methyl-5-thio-alpha-D-ribose 1-phosphate: step 3/6. It participates in amino-acid biosynthesis; L-methionine biosynthesis via salvage pathway; L-methionine from S-methyl-5-thio-alpha-D-ribose 1-phosphate: step 4/6. Its function is as follows. Bifunctional enzyme that catalyzes the enolization of 2,3-diketo-5-methylthiopentyl-1-phosphate (DK-MTP-1-P) into the intermediate 2-hydroxy-3-keto-5-methylthiopentenyl-1-phosphate (HK-MTPenyl-1-P), which is then dephosphorylated to form the acireductone 1,2-dihydroxy-3-keto-5-methylthiopentene (DHK-MTPene). This is Enolase-phosphatase E1 from Drosophila pseudoobscura pseudoobscura (Fruit fly).